The following is a 249-amino-acid chain: Sulfate transporter CysZ (249 aa).

4 helical membrane passes run 26–46 (LFVL…IYFA), 71–91 (VIWP…FTML), 150–170 (LFIL…WLLF), and 206–226 (LGFG…ILMM).

The protein belongs to the CysZ family.

It localises to the cell inner membrane. In terms of biological role, high affinity, high specificity proton-dependent sulfate transporter, which mediates sulfate uptake. Provides the sulfur source for the cysteine synthesis pathway. This chain is Sulfate transporter CysZ, found in Pseudomonas fluorescens (strain ATCC BAA-477 / NRRL B-23932 / Pf-5).